Here is a 1001-residue protein sequence, read N- to C-terminus: Non-canonical poly(A) RNA polymerase protein Trf4-1 (1001 aa).

2 stretches are compositionally biased toward low complexity: residues 44 to 86 (TING…NNSS) and 127 to 163 (RNST…STNG). Disordered stretches follow at residues 44 to 92 (TING…PYLS) and 115 to 238 (QQQQ…AGGA). The span at 164 to 178 (PGAGTGTSTGAGGTG) shows a compositional bias: gly residues. A compositionally biased stretch (low complexity) spans 179-216 (TNSPATTASSTAATTTGPATSMSDTSNNPPQSTTTPAS). Residues Asp328 and Asp330 each coordinate Mn(2+). The 60-residue stretch at 458–517 (NLGVLLLEFFELYGRRFNYMKIGISIKNGGRYMPKDELQRDMVDGHRPSLLCIEDPLTPG) folds into the PAP-associated domain. Disordered regions lie at residues 631–652 (PTAH…PGAH), 687–740 (QQQQ…AQEV), 767–963 (ASNS…LRGT), and 977–1001 (SSES…RDER). Residues 635-649 (GHSHAHSHSHGHAHP) show a composition bias toward basic residues. Composition is skewed to low complexity over residues 687 to 708 (QQQQ…NQSQ) and 768 to 788 (SNSW…TGSS). A compositionally biased stretch (gly residues) spans 827 to 841 (VGTGSNRGGGDGSGG). Residues 844-854 (YNQRNNHNSSG) show a composition bias toward polar residues. Low complexity predominate over residues 855 to 880 (YYHQQYYVPPPMQQQLSKSNSSSNYH). Residues 881–912 (QQHHHSHSHGNHSHRQQHHHQQQHHHQQRPQH) show a composition bias toward basic residues. Low complexity-rich tracts occupy residues 932-955 (SAGN…SNNS) and 977-992 (SSES…SSRS).

Belongs to the DNA polymerase type-B-like family. It depends on Mn(2+) as a cofactor.

Its subcellular location is the cytoplasm. It catalyses the reaction RNA(n) + ATP = RNA(n)-3'-adenine ribonucleotide + diphosphate. Its function is as follows. Involved in a post-transcriptional quality control mechanism limiting inappropriate expression of genetic information. Polyadenylation is required for the degradative activity of the exosome on several of its nuclear RNA substrates. Polyadenylates RNA processing and degradation intermediates of snRNAs and mRNAs. The polypeptide is Non-canonical poly(A) RNA polymerase protein Trf4-1 (Drosophila melanogaster (Fruit fly)).